The primary structure comprises 170 residues: Cytochrome c-type biogenesis protein CcmE (170 aa).

The Cytoplasmic segment spans residues 1-7; it reads MTRKKRR. The helical; Signal-anchor for type II membrane protein transmembrane segment at 8–28 threads the bilayer; the sequence is LILIAACGSVLALAVGLILYA. The Periplasmic portion of the chain corresponds to 29-170; that stretch reads MSGSIVFFRS…DSTLGPRSER (142 aa). Residues His-122 and Tyr-126 each coordinate heme. Positions 132 to 170 are disordered; it reads ADALKAQGRWQEGGPNRGGPAPKPATAAADSTLGPRSER.

It belongs to the CcmE/CycJ family.

It is found in the cell inner membrane. In terms of biological role, heme chaperone required for the biogenesis of c-type cytochromes. Transiently binds heme delivered by CcmC and transfers the heme to apo-cytochromes in a process facilitated by CcmF and CcmH. This chain is Cytochrome c-type biogenesis protein CcmE, found in Methylobacterium radiotolerans (strain ATCC 27329 / DSM 1819 / JCM 2831 / NBRC 15690 / NCIMB 10815 / 0-1).